Consider the following 47-residue polypeptide: PRGSPRTEYEACRVRCQVAEHGVERQRRCQQVCEKRLREREGRREVD.

2 cysteine pairs are disulfide-bonded: Cys12–Cys33 and Cys16–Cys29.

In terms of assembly, homotetramer.

It carries out the reaction Endohydrolysis of the N-glycosidic bond at one specific adenosine on the 28S rRNA.. Its function is as follows. Inhibits protein synthesis in animal cells. This Luffa aegyptiaca (Sponge gourd) protein is Ribosome-inactivating protein luffin P1.